The primary structure comprises 326 residues: MNWINKVTPPGLKTMMSKKDTPDDLWVKCPASGELIYRNDLEQSWYVTPAGAHLRISPRMRFRILFDDERWEPISLPQVPLDPLKFKDDKPYPARLKAAKAKILNRDIKETEDGGAPLLQEDCMVAAYGKIGGVPAVVLVQDFEFMGGSLGMAAGEAFITAAQLALARKSAFVVCTASGGARMQEGTLSLMQMPRTTLAINDLADAKLPYVVVLTDPTSGGVSASYAMLGDVHIAEPGAMIAFSGPRVIEQTIRESLPKGFQRSEFLREKGQVDIVVDRRKLKATVARVLGHLLPMSRRRDDRSTLQLTPPKTHAPKPPEPKVKPD.

Positions leucine 25–leucine 308 constitute a CoA carboxyltransferase N-terminal domain. The interval arginine 298–aspartate 326 is disordered. The span at lysine 317 to aspartate 326 shows a compositional bias: basic and acidic residues.

This sequence belongs to the AccD/PCCB family. Acetyl-CoA carboxylase is a heterohexamer composed of biotin carboxyl carrier protein (AccB), biotin carboxylase (AccC) and two subunits each of ACCase subunit alpha (AccA) and ACCase subunit beta (AccD).

It localises to the cytoplasm. It carries out the reaction N(6)-carboxybiotinyl-L-lysyl-[protein] + acetyl-CoA = N(6)-biotinyl-L-lysyl-[protein] + malonyl-CoA. The protein operates within lipid metabolism; malonyl-CoA biosynthesis; malonyl-CoA from acetyl-CoA: step 1/1. Functionally, component of the acetyl coenzyme A carboxylase (ACC) complex. Biotin carboxylase (BC) catalyzes the carboxylation of biotin on its carrier protein (BCCP) and then the CO(2) group is transferred by the transcarboxylase to acetyl-CoA to form malonyl-CoA. This is Acetyl-coenzyme A carboxylase carboxyl transferase subunit beta from Hyphomonas neptunium (strain ATCC 15444).